We begin with the raw amino-acid sequence, 385 residues long: Succinate--CoA ligase [ADP-forming] subunit beta (385 aa).

Residues 9-244 (KEILRKYGVP…QDEEDPLETR (236 aa)) form the ATP-grasp domain. ATP contacts are provided by residues Lys-46, 53–55 (GRG), Glu-99, Cys-102, and Glu-107. The Mg(2+) site is built by Asn-199 and Asp-213. Substrate-binding positions include Asn-264 and 321 to 323 (GIM).

Belongs to the succinate/malate CoA ligase beta subunit family. As to quaternary structure, heterotetramer of two alpha and two beta subunits. The cofactor is Mg(2+).

The enzyme catalyses succinate + ATP + CoA = succinyl-CoA + ADP + phosphate. It carries out the reaction GTP + succinate + CoA = succinyl-CoA + GDP + phosphate. The protein operates within carbohydrate metabolism; tricarboxylic acid cycle; succinate from succinyl-CoA (ligase route): step 1/1. In terms of biological role, succinyl-CoA synthetase functions in the citric acid cycle (TCA), coupling the hydrolysis of succinyl-CoA to the synthesis of either ATP or GTP and thus represents the only step of substrate-level phosphorylation in the TCA. The beta subunit provides nucleotide specificity of the enzyme and binds the substrate succinate, while the binding sites for coenzyme A and phosphate are found in the alpha subunit. This is Succinate--CoA ligase [ADP-forming] subunit beta from Rickettsia bellii (strain RML369-C).